The sequence spans 231 residues: Large ribosomal subunit protein uL1 (231 aa).

It belongs to the universal ribosomal protein uL1 family. In terms of assembly, part of the 50S ribosomal subunit.

Functionally, binds directly to 23S rRNA. The L1 stalk is quite mobile in the ribosome, and is involved in E site tRNA release. Its function is as follows. Protein L1 is also a translational repressor protein, it controls the translation of the L11 operon by binding to its mRNA. This chain is Large ribosomal subunit protein uL1, found in Acinetobacter baylyi (strain ATCC 33305 / BD413 / ADP1).